We begin with the raw amino-acid sequence, 318 residues long: 2-desacetyl-2-hydroxyethyl bacteriochlorophyllide A dehydrogenase (318 aa).

The protein operates within porphyrin-containing compound metabolism; bacteriochlorophyll biosynthesis (light-independent). This protein catalyzes the penultimate step in bacteriochlorophyll a biosynthesis. This chain is 2-desacetyl-2-hydroxyethyl bacteriochlorophyllide A dehydrogenase (bchC), found in Cereibacter sphaeroides (strain ATCC 17023 / DSM 158 / JCM 6121 / CCUG 31486 / LMG 2827 / NBRC 12203 / NCIMB 8253 / ATH 2.4.1.) (Rhodobacter sphaeroides).